The following is a 440-amino-acid chain: Transposon Ty1-JR1 Gag polyprotein (440 aa).

The segment covering 1 to 16 (MESQQLSQHSHISHGS) has biased composition (low complexity). Disordered stretches follow at residues 1 to 93 (MESQ…MMTQ), 126 to 173 (PQSQ…RPPP), and 352 to 440 (GSRN…PGTY). Polar residues-rich tracts occupy residues 48 to 60 (TKAN…TPAS) and 127 to 152 (QSQF…GNTF). Over residues 153–165 (TDSSSADSDMTST) the composition is skewed to low complexity. The segment at 299–401 (NNGIHINNKV…NSKSKTARAH (103 aa)) is RNA-binding. Low complexity predominate over residues 402–418 (NVSTSNNSPSTDNDSIS). S416 carries the phosphoserine modification. Over residues 419–428 (KSTTEPIQLN) the composition is skewed to polar residues. Residues 429–440 (NKHDLHLRPGTY) are compositionally biased toward basic and acidic residues.

As to quaternary structure, homotrimer.

The protein localises to the cytoplasm. Functionally, capsid protein (CA) is the structural component of the virus-like particle (VLP), forming the shell that encapsulates the retrotransposons dimeric RNA genome. The particles are assembled from trimer-clustered units and there are holes in the capsid shells that allow for the diffusion of macromolecules. CA also has nucleocapsid-like chaperone activity, promoting primer tRNA(i)-Met annealing to the multipartite primer-binding site (PBS), dimerization of Ty1 RNA and initiation of reverse transcription. The sequence is that of Transposon Ty1-JR1 Gag polyprotein (TY1A-JR1) from Saccharomyces cerevisiae (strain ATCC 204508 / S288c) (Baker's yeast).